The following is a 301-amino-acid chain: Acetylglutamate kinase (301 aa).

Residues 68-69 (GG), R90, and N195 each bind substrate.

This sequence belongs to the acetylglutamate kinase family. ArgB subfamily.

Its subcellular location is the cytoplasm. The catalysed reaction is N-acetyl-L-glutamate + ATP = N-acetyl-L-glutamyl 5-phosphate + ADP. It functions in the pathway amino-acid biosynthesis; L-arginine biosynthesis; N(2)-acetyl-L-ornithine from L-glutamate: step 2/4. In terms of biological role, catalyzes the ATP-dependent phosphorylation of N-acetyl-L-glutamate. In Pseudomonas fluorescens (strain ATCC BAA-477 / NRRL B-23932 / Pf-5), this protein is Acetylglutamate kinase.